The chain runs to 198 residues: Peptide methionine sulfoxide reductase MsrA 2 (198 aa).

Cys32 is an active-site residue.

The protein belongs to the MsrA Met sulfoxide reductase family.

The enzyme catalyses L-methionyl-[protein] + [thioredoxin]-disulfide + H2O = L-methionyl-(S)-S-oxide-[protein] + [thioredoxin]-dithiol. It catalyses the reaction [thioredoxin]-disulfide + L-methionine + H2O = L-methionine (S)-S-oxide + [thioredoxin]-dithiol. Functionally, has an important function as a repair enzyme for proteins that have been inactivated by oxidation. Catalyzes the reversible oxidation-reduction of methionine sulfoxide in proteins to methionine. This Rhizobium meliloti (strain 1021) (Ensifer meliloti) protein is Peptide methionine sulfoxide reductase MsrA 2 (msrA2).